The sequence spans 282 residues: NADPH-dependent 7-cyano-7-deazaguanine reductase (282 aa).

A substrate-binding site is contributed by Ile-88–Ser-90. Ser-90–Lys-91 provides a ligand contact to NADPH. Residue Cys-190 is the Thioimide intermediate of the active site. Residue Asp-197 is the Proton donor of the active site. His-229–Glu-230 contributes to the substrate binding site. Arg-258–Gly-259 is a binding site for NADPH.

This sequence belongs to the GTP cyclohydrolase I family. QueF type 2 subfamily. As to quaternary structure, homodimer.

Its subcellular location is the cytoplasm. It catalyses the reaction 7-aminomethyl-7-carbaguanine + 2 NADP(+) = 7-cyano-7-deazaguanine + 2 NADPH + 3 H(+). It functions in the pathway tRNA modification; tRNA-queuosine biosynthesis. In terms of biological role, catalyzes the NADPH-dependent reduction of 7-cyano-7-deazaguanine (preQ0) to 7-aminomethyl-7-deazaguanine (preQ1). This chain is NADPH-dependent 7-cyano-7-deazaguanine reductase, found in Salmonella schwarzengrund (strain CVM19633).